Here is a 393-residue protein sequence, read N- to C-terminus: Elongation factor Tu (393 aa).

A tr-type G domain is found at 6–204; the sequence is KPHINVGTIG…ALEKIELPMR (199 aa). A G1 region spans residues 15 to 22; sequence GHVDHGKT. Residue 15–22 coordinates GTP; it reads GHVDHGKT. Thr22 lines the Mg(2+) pocket. Residues 58 to 62 are G2; the sequence is GITIS. The tract at residues 79 to 82 is G3; sequence DCPG. Residues 79 to 83 and 134 to 137 contribute to the GTP site; these read DCPGH and NKCD. The interval 134 to 137 is G4; that stretch reads NKCD. The segment at 172–174 is G5; the sequence is SAV.

The protein belongs to the TRAFAC class translation factor GTPase superfamily. Classic translation factor GTPase family. EF-Tu/EF-1A subfamily. In terms of assembly, monomer.

The protein localises to the cytoplasm. It catalyses the reaction GTP + H2O = GDP + phosphate + H(+). Its function is as follows. GTP hydrolase that promotes the GTP-dependent binding of aminoacyl-tRNA to the A-site of ribosomes during protein biosynthesis. The protein is Elongation factor Tu of Anaplasma phagocytophilum (strain HZ).